The chain runs to 180 residues: Large ribosomal subunit protein uL10 (180 aa).

It belongs to the universal ribosomal protein uL10 family. Part of the ribosomal stalk of the 50S ribosomal subunit. The N-terminus interacts with L11 and the large rRNA to form the base of the stalk. The C-terminus forms an elongated spine to which L12 dimers bind in a sequential fashion forming a multimeric L10(L12)X complex.

Its function is as follows. Forms part of the ribosomal stalk, playing a central role in the interaction of the ribosome with GTP-bound translation factors. This is Large ribosomal subunit protein uL10 (rplJ) from Treponema pallidum (strain Nichols).